The following is a 63-amino-acid chain: 2-hydroxymuconate tautomerase (63 aa).

Catalysis depends on Pro2, which acts as the Proton acceptor; via imino nitrogen.

This sequence belongs to the 4-oxalocrotonate tautomerase family. Homohexamer.

It carries out the reaction (2Z,4E)-2-hydroxyhexa-2,4-dienedioate = (3E)-2-oxohex-3-enedioate. It participates in xenobiotic degradation; toluene degradation. The protein operates within xenobiotic degradation; xylene degradation. Its function is as follows. Catalyzes the ketonization of 2-hydroxymuconate stereoselectively to yield 2-oxo-3-hexenedioate. The polypeptide is 2-hydroxymuconate tautomerase (xylH) (Pseudomonas putida (Arthrobacter siderocapsulatus)).